Reading from the N-terminus, the 78-residue chain is Pigment-dispersing hormone 2 peptides (78 aa).

The first 21 residues, 1–21, serve as a signal peptide directing secretion; that stretch reads MRSGVFVAVLVVVVFALLTQG. Alanine amide is present on Ala-75.

Belongs to the arthropod PDH family. Eyestalk sinus gland.

The protein localises to the secreted. In terms of biological role, the pigment-dispersing hormone causes the migration of the distal retinal pigment into the proximal end of the pigment chromatophore cells and thus decreases the amount of light entering the retinulas. May also function as a neurotransmitter and/or neuromodulator. The polypeptide is Pigment-dispersing hormone 2 peptides (PDH2) (Callinectes sapidus (Blue crab)).